Reading from the N-terminus, the 262-residue chain is Hydroxyethylthiazole kinase (262 aa).

Residue M50 coordinates substrate. The ATP site is built by R125 and T171. A substrate-binding site is contributed by G198.

This sequence belongs to the Thz kinase family. Requires Mg(2+) as cofactor.

It carries out the reaction 5-(2-hydroxyethyl)-4-methylthiazole + ATP = 4-methyl-5-(2-phosphooxyethyl)-thiazole + ADP + H(+). It participates in cofactor biosynthesis; thiamine diphosphate biosynthesis; 4-methyl-5-(2-phosphoethyl)-thiazole from 5-(2-hydroxyethyl)-4-methylthiazole: step 1/1. Catalyzes the phosphorylation of the hydroxyl group of 4-methyl-5-beta-hydroxyethylthiazole (THZ). The sequence is that of Hydroxyethylthiazole kinase from Shigella sonnei (strain Ss046).